The primary structure comprises 328 residues: GTPase Obg 2 (328 aa).

The 139-residue stretch at 1–139 (MSFRREKFIE…HCVLLKLKIV (139 aa)) folds into the Obg domain. Residues 140–309 (SDVGIIGMPN…LHAQVKKAVV (170 aa)) form the OBG-type G domain. GTP is bound by residues 146–153 (GMPNAGKS), 171–175 (FTTLE), 192–195 (DIPG), 259–262 (NKCD), and 290–292 (GDE). Positions 153 and 173 each coordinate Mg(2+).

This sequence belongs to the TRAFAC class OBG-HflX-like GTPase superfamily. OBG GTPase family. Monomer. Mg(2+) serves as cofactor.

It is found in the cytoplasm. Its function is as follows. An essential GTPase which binds GTP, GDP and possibly (p)ppGpp with moderate affinity, with high nucleotide exchange rates and a fairly low GTP hydrolysis rate. Plays a role in control of the cell cycle, stress response, ribosome biogenesis and in those bacteria that undergo differentiation, in morphogenesis control. The chain is GTPase Obg 2 from Anaplasma marginale (strain St. Maries).